A 53-amino-acid chain; its full sequence is MSILLKILFKLLLLILSITFVITDCLPRSCASFGCCSGNCATWCDQCDIKYSC.

The first 23 residues, 1-23, serve as a signal peptide directing secretion; that stretch reads MSILLKILFKLLLLILSITFVIT.

This is an uncharacterized protein from Acheta domesticus (House cricket).